A 1070-amino-acid chain; its full sequence is DNA-directed RNA polymerase subunit beta (1070 aa).

It belongs to the RNA polymerase beta chain family. As to quaternary structure, in plastids the minimal PEP RNA polymerase catalytic core is composed of four subunits: alpha, beta, beta', and beta''. When a (nuclear-encoded) sigma factor is associated with the core the holoenzyme is formed, which can initiate transcription.

Its subcellular location is the plastid. The protein localises to the chloroplast. The catalysed reaction is RNA(n) + a ribonucleoside 5'-triphosphate = RNA(n+1) + diphosphate. Functionally, DNA-dependent RNA polymerase catalyzes the transcription of DNA into RNA using the four ribonucleoside triphosphates as substrates. This is DNA-directed RNA polymerase subunit beta from Citrus sinensis (Sweet orange).